A 218-amino-acid polypeptide reads, in one-letter code: GTP cyclohydrolase 1 (218 aa).

Residues Cys109, His112, and Cys180 each coordinate Zn(2+).

It belongs to the GTP cyclohydrolase I family. As to quaternary structure, toroid-shaped homodecamer, composed of two pentamers of five dimers.

The catalysed reaction is GTP + H2O = 7,8-dihydroneopterin 3'-triphosphate + formate + H(+). It participates in cofactor biosynthesis; 7,8-dihydroneopterin triphosphate biosynthesis; 7,8-dihydroneopterin triphosphate from GTP: step 1/1. In Haemophilus influenzae (strain ATCC 51907 / DSM 11121 / KW20 / Rd), this protein is GTP cyclohydrolase 1 (folE).